A 336-amino-acid polypeptide reads, in one-letter code: MSDTMVKNQAEEDEIVKSLNNVLKIVVTARKCLDDMKPIELPSELVESPLSMLKDVATLIHQYTTKLSVAAKPPITRDALEKYANDMATTITPLIAAVQVFNAEKYGEIIQNRLKMYAERVLFGIEALLRSVSPKPLGYISEDWKTRGRLIDTGILWESCEKIEKLGSEGIVGYMLEEWDNFVSMLEDARSDLEDYKEGDDSNWDDFGSESEDDSKEAHSEEVFRSEEQIQLANSLLQKLNACKILFLSIKKRRIKNEYPNTFLGELFNAAKQTSDSIDDIVAQIQEDDENFENELDNFHRSARNLCKICISSAQEDSFTPWFSKWLENWEIVSQK.

The disordered stretch occupies residues tyrosine 196–glutamate 222. Over residues aspartate 201–serine 215 the composition is skewed to acidic residues. Residue serine 211 is modified to Phosphoserine.

This is an uncharacterized protein from Schizosaccharomyces pombe (strain 972 / ATCC 24843) (Fission yeast).